The chain runs to 243 residues: Probable 2-phosphosulfolactate phosphatase (243 aa).

This sequence belongs to the ComB family. Mg(2+) is required as a cofactor.

It carries out the reaction (2R)-O-phospho-3-sulfolactate + H2O = (2R)-3-sulfolactate + phosphate. The chain is Probable 2-phosphosulfolactate phosphatase from Prochlorococcus marinus (strain SARG / CCMP1375 / SS120).